The following is a 276-amino-acid chain: Octanoyltransferase LipM (276 aa).

Positions 32-247 (GEVAPTLRFY…GFEDALQLTF (216 aa)) constitute a BPL/LPL catalytic domain. Catalysis depends on cysteine 149, which acts as the Acyl-thioester intermediate.

Belongs to the octanoyltransferase LipM family. As to quaternary structure, monomer.

It catalyses the reaction octanoyl-[ACP] + L-lysyl-[protein] = N(6)-octanoyl-L-lysyl-[protein] + holo-[ACP] + H(+). The protein operates within protein modification; protein lipoylation via endogenous pathway; protein N(6)-(lipoyl)lysine from octanoyl-[acyl-carrier-protein]. Its function is as follows. Catalyzes the transfer of endogenously produced octanoic acid from octanoyl-acyl-carrier-protein onto the lipoyl domain of GcvH, an intermediate carrier during protein lipoylation. The polypeptide is Octanoyltransferase LipM (Exiguobacterium sibiricum (strain DSM 17290 / CCUG 55495 / CIP 109462 / JCM 13490 / 255-15)).